Here is a 40-residue protein sequence, read N- to C-terminus: Hemoglobin subunit alpha-2 (40 aa).

Residues 1-40 (VGPHLDDYGGEALHRNFEVYPQTKTYFPHFDASAGSNQLK) form the Globin domain.

Belongs to the globin family. In terms of assembly, heterotetramer of two alpha chains and two beta chains. As to expression, red blood cells.

Involved in oxygen transport from the lung to the various peripheral tissues. In Saara hardwickii (Indian spiny-tailed lizard), this protein is Hemoglobin subunit alpha-2.